Here is a 286-residue protein sequence, read N- to C-terminus: Beta-lactamase SHV-3 (286 aa).

A signal peptide spans 1 to 21 (MRYIRLCIISLLATLPLAVHA). Residue S66 is the Acyl-ester intermediate of the active site. Cysteines 73 and 119 form a disulfide. E164 serves as the catalytic Proton acceptor. 230-232 (KTG) is a binding site for substrate.

Belongs to the class-A beta-lactamase family.

It catalyses the reaction a beta-lactam + H2O = a substituted beta-amino acid. In terms of biological role, this enzyme hydrolyzes cefotaxime, ceftazidime and other broad spectrum cephalosporins. This is Beta-lactamase SHV-3 (bla) from Klebsiella pneumoniae.